We begin with the raw amino-acid sequence, 291 residues long: Probable 2-(5''-triphosphoribosyl)-3'-dephosphocoenzyme-A synthase (291 aa).

The protein belongs to the CitG/MdcB family.

It carries out the reaction 3'-dephospho-CoA + ATP = 2'-(5''-triphospho-alpha-D-ribosyl)-3'-dephospho-CoA + adenine. In terms of biological role, involved in the formation of 2-(5''-phosphoribosyl)-3'-dephosphocoenzyme-A, the prosthetic group of the acyl-carrier protein of the malonate decarboxylase. This chain is Probable 2-(5''-triphosphoribosyl)-3'-dephosphocoenzyme-A synthase, found in Pseudomonas fluorescens (strain ATCC BAA-477 / NRRL B-23932 / Pf-5).